The primary structure comprises 285 residues: Ribosomal RNA small subunit methyltransferase A (285 aa).

S-adenosyl-L-methionine is bound by residues N30, L32, G57, E78, D101, and N121.

The protein belongs to the class I-like SAM-binding methyltransferase superfamily. rRNA adenine N(6)-methyltransferase family. RsmA subfamily.

Its subcellular location is the cytoplasm. The catalysed reaction is adenosine(1518)/adenosine(1519) in 16S rRNA + 4 S-adenosyl-L-methionine = N(6)-dimethyladenosine(1518)/N(6)-dimethyladenosine(1519) in 16S rRNA + 4 S-adenosyl-L-homocysteine + 4 H(+). Functionally, specifically dimethylates two adjacent adenosines (A1518 and A1519) in the loop of a conserved hairpin near the 3'-end of 16S rRNA in the 30S particle. May play a critical role in biogenesis of 30S subunits. The sequence is that of Ribosomal RNA small subunit methyltransferase A from Treponema pallidum (strain Nichols).